Consider the following 62-residue polypeptide: Photosystem II reaction center protein Z (62 aa).

2 helical membrane passes run 8–28 (AVFA…VVLA) and 41–61 (FSGA…NSFV).

This sequence belongs to the PsbZ family. As to quaternary structure, PSII is composed of 1 copy each of membrane proteins PsbA, PsbB, PsbC, PsbD, PsbE, PsbF, PsbH, PsbI, PsbJ, PsbK, PsbL, PsbM, PsbT, PsbY, PsbZ, Psb30/Ycf12, at least 3 peripheral proteins of the oxygen-evolving complex and a large number of cofactors. It forms dimeric complexes.

It localises to the plastid. The protein resides in the chloroplast thylakoid membrane. Its function is as follows. May control the interaction of photosystem II (PSII) cores with the light-harvesting antenna, regulates electron flow through the 2 photosystem reaction centers. PSII is a light-driven water plastoquinone oxidoreductase, using light energy to abstract electrons from H(2)O, generating a proton gradient subsequently used for ATP formation. The protein is Photosystem II reaction center protein Z of Zygnema circumcarinatum (Green alga).